The sequence spans 171 residues: 3-hydroxydecanoyl-[acyl-carrier-protein] dehydratase (171 aa).

H70 is a catalytic residue.

The protein belongs to the thioester dehydratase family. FabA subfamily. In terms of assembly, homodimer.

It localises to the cytoplasm. The enzyme catalyses a (3R)-hydroxyacyl-[ACP] = a (2E)-enoyl-[ACP] + H2O. It catalyses the reaction (3R)-hydroxydecanoyl-[ACP] = (2E)-decenoyl-[ACP] + H2O. It carries out the reaction (2E)-decenoyl-[ACP] = (3Z)-decenoyl-[ACP]. Its pathway is lipid metabolism; fatty acid biosynthesis. Its function is as follows. Necessary for the introduction of cis unsaturation into fatty acids. Catalyzes the dehydration of (3R)-3-hydroxydecanoyl-ACP to E-(2)-decenoyl-ACP and then its isomerization to Z-(3)-decenoyl-ACP. Can catalyze the dehydratase reaction for beta-hydroxyacyl-ACPs with saturated chain lengths up to 16:0, being most active on intermediate chain length. This Pseudomonas fluorescens (strain Pf0-1) protein is 3-hydroxydecanoyl-[acyl-carrier-protein] dehydratase.